A 258-amino-acid chain; its full sequence is Thymidylate synthase (258 aa).

R21 lines the dUMP pocket. H51 contacts (6R)-5,10-methylene-5,6,7,8-tetrahydrofolate. 121–122 is a binding site for dUMP; it reads RR. The Nucleophile role is filled by C141. Residues 161–164, N172, and 202–204 contribute to the dUMP site; these read RSAD and HLY. Residue D164 participates in (6R)-5,10-methylene-5,6,7,8-tetrahydrofolate binding. A257 is a binding site for (6R)-5,10-methylene-5,6,7,8-tetrahydrofolate.

The protein belongs to the thymidylate synthase family. Bacterial-type ThyA subfamily. In terms of assembly, homodimer.

It is found in the cytoplasm. The enzyme catalyses dUMP + (6R)-5,10-methylene-5,6,7,8-tetrahydrofolate = 7,8-dihydrofolate + dTMP. The protein operates within pyrimidine metabolism; dTTP biosynthesis. In terms of biological role, catalyzes the reductive methylation of 2'-deoxyuridine-5'-monophosphate (dUMP) to 2'-deoxythymidine-5'-monophosphate (dTMP) while utilizing 5,10-methylenetetrahydrofolate (mTHF) as the methyl donor and reductant in the reaction, yielding dihydrofolate (DHF) as a by-product. This enzymatic reaction provides an intracellular de novo source of dTMP, an essential precursor for DNA biosynthesis. The protein is Thymidylate synthase of Dichelobacter nodosus (strain VCS1703A).